The following is a 244-amino-acid chain: tRNA (guanine-N(7)-)-methyltransferase (244 aa).

A compositionally biased stretch (polar residues) spans 1–10; the sequence is MSDTPQSPAQ. A disordered region spans residues 1-20; sequence MSDTPQSPAQGSLAEHDEAR. S-adenosyl-L-methionine-binding residues include glutamate 74, glutamate 99, aspartate 126, and aspartate 149. The active site involves aspartate 149. Residues lysine 153, aspartate 185, and 222–225 contribute to the substrate site; that span reads TKFE.

It belongs to the class I-like SAM-binding methyltransferase superfamily. TrmB family.

It catalyses the reaction guanosine(46) in tRNA + S-adenosyl-L-methionine = N(7)-methylguanosine(46) in tRNA + S-adenosyl-L-homocysteine. The protein operates within tRNA modification; N(7)-methylguanine-tRNA biosynthesis. In terms of biological role, catalyzes the formation of N(7)-methylguanine at position 46 (m7G46) in tRNA. In Pseudomonas aeruginosa (strain UCBPP-PA14), this protein is tRNA (guanine-N(7)-)-methyltransferase.